An 86-amino-acid chain; its full sequence is Probable protein BRICK1 (86 aa).

The stretch at glutamate 47 to asparagine 81 forms a coiled coil.

The protein belongs to the BRK1 family. Binds SCAR.

It localises to the cytoplasm. The protein localises to the cytoskeleton. Its function is as follows. Involved in regulation of actin and microtubule organization. Part of a WAVE complex that activates the Arp2/3 complex. The polypeptide is Probable protein BRICK1 (Oryza sativa subsp. japonica (Rice)).